We begin with the raw amino-acid sequence, 341 residues long: Delta(1)-pyrroline-2-carboxylate/Delta(1)-piperideine-2-carboxylate reductase (341 aa).

The active-site Charge relay system is S52. H53 acts as the Proton donor in catalysis. R57 lines the substrate pocket. 125 to 129 contributes to the NADP(+) binding site; that stretch reads HFAAL. T165 lines the substrate pocket. NADP(+) is bound at residue 183 to 185; it reads DMA. Residue 191 to 192 coordinates substrate; the sequence is HG. The Charge relay system role is filled by D193. NADP(+)-binding positions include 235–236 and 308–314; these read HK and RMPGERR.

Belongs to the LDH2/MDH2 oxidoreductase family. Homodimer.

The catalysed reaction is L-pipecolate + NADP(+) = Delta(1)-piperideine-2-carboxylate + NADPH + H(+). It catalyses the reaction L-proline + NADP(+) = 1-pyrroline-2-carboxylate + NADPH + H(+). It carries out the reaction N-methyl-L-alanine + NADP(+) + H2O = methylamine + pyruvate + NADPH + H(+). With respect to regulation, is inhibited by the substrate analog pyrrole-2-carboxylate, but not by N-formylphenylalanine. Catalyzes the reduction of both Delta(1)-pyrroline-2-carboxylate (Pyr2C) and Delta(1)-piperideine-2-carboxylate (Pip2C) to L-proline and L-pipecolate, respectively, using NADPH as the electron donor. Can use NADH instead of NADPH, although with much less efficiency. Plays an essential role in the catabolism of D-proline and D-lysine, which allows P.putida to grow on each of these amino-acids as a sole carbon source; D-lysine appears to be catabolized only through the pipecolate pathway. Can also catalyze the reverse oxidation reactions, albeit at a much lower rate. To a lesser extent, is able to catalyze in vitro the NADPH-dependent formation of N-alkyl-L-amino acids from the corresponding alpha-oxo acids and alkylamines, e.g. the formation of N-methylalanine from pyruvate and N-methylamine; cannot use ammonia as substrate for these reductive amination reactions. Shows neither malate dehydrogenase nor lactate dehydrogenase activity. This is Delta(1)-pyrroline-2-carboxylate/Delta(1)-piperideine-2-carboxylate reductase from Pseudomonas putida (Arthrobacter siderocapsulatus).